The sequence spans 189 residues: Xanthine phosphoribosyltransferase (189 aa).

Residues L20 and N27 each coordinate xanthine. 127 to 131 is a binding site for 5-phospho-alpha-D-ribose 1-diphosphate; the sequence is AYGNA. K155 is a binding site for xanthine.

This sequence belongs to the purine/pyrimidine phosphoribosyltransferase family. Xpt subfamily. Homodimer.

It is found in the cytoplasm. The catalysed reaction is XMP + diphosphate = xanthine + 5-phospho-alpha-D-ribose 1-diphosphate. The protein operates within purine metabolism; XMP biosynthesis via salvage pathway; XMP from xanthine: step 1/1. Converts the preformed base xanthine, a product of nucleic acid breakdown, to xanthosine 5'-monophosphate (XMP), so it can be reused for RNA or DNA synthesis. In Bacteroides fragilis (strain ATCC 25285 / DSM 2151 / CCUG 4856 / JCM 11019 / LMG 10263 / NCTC 9343 / Onslow / VPI 2553 / EN-2), this protein is Xanthine phosphoribosyltransferase.